The primary structure comprises 87 residues: Small ribosomal subunit protein bS18 (87 aa).

Belongs to the bacterial ribosomal protein bS18 family. As to quaternary structure, part of the 30S ribosomal subunit. Forms a tight heterodimer with protein bS6.

Functionally, binds as a heterodimer with protein bS6 to the central domain of the 16S rRNA, where it helps stabilize the platform of the 30S subunit. The polypeptide is Small ribosomal subunit protein bS18 (Mesomycoplasma hyopneumoniae (strain 232) (Mycoplasma hyopneumoniae)).